We begin with the raw amino-acid sequence, 399 residues long: S-adenosylmethionine synthase (399 aa).

An ATP-binding site is contributed by His-17. Asp-19 contributes to the Mg(2+) binding site. Glu-45 is a K(+) binding site. L-methionine-binding residues include Glu-58 and Gln-101. The flexible loop stretch occupies residues 101-111; that stretch reads QSPDIAQGVDE. ATP contacts are provided by residues 177-179, 244-245, Asp-253, 259-260, Ala-276, and Lys-280; these read DAK, RF, and RK. Residue Asp-253 participates in L-methionine binding. Lys-284 serves as a coordination point for L-methionine.

It belongs to the AdoMet synthase family. Homotetramer; dimer of dimers. Mg(2+) serves as cofactor. K(+) is required as a cofactor.

Its subcellular location is the cytoplasm. It catalyses the reaction L-methionine + ATP + H2O = S-adenosyl-L-methionine + phosphate + diphosphate. It functions in the pathway amino-acid biosynthesis; S-adenosyl-L-methionine biosynthesis; S-adenosyl-L-methionine from L-methionine: step 1/1. Catalyzes the formation of S-adenosylmethionine (AdoMet) from methionine and ATP. The overall synthetic reaction is composed of two sequential steps, AdoMet formation and the subsequent tripolyphosphate hydrolysis which occurs prior to release of AdoMet from the enzyme. The polypeptide is S-adenosylmethionine synthase (Listeria monocytogenes serotype 4b (strain CLIP80459)).